A 316-amino-acid chain; its full sequence is Succinoglycan biosynthesis protein ExoV (316 aa).

Its pathway is glycan metabolism; exopolysaccharide biosynthesis. The polypeptide is Succinoglycan biosynthesis protein ExoV (exoV) (Rhizobium meliloti (strain 1021) (Ensifer meliloti)).